Reading from the N-terminus, the 307-residue chain is D-alanine--D-alanine ligase (307 aa).

The region spanning 101–301 (KDVLRAAGVP…FGELVRWMVE (201 aa)) is the ATP-grasp domain. An ATP-binding site is contributed by 128–182 (MTPPYVVKPLGEGSSFGVIIVRADQTHPPQELTRDDWAYGDLVLVERFVAGRELT). Mg(2+)-binding residues include Asp-251, Glu-268, and Asn-270.

It belongs to the D-alanine--D-alanine ligase family. Mg(2+) serves as cofactor. Requires Mn(2+) as cofactor.

Its subcellular location is the cytoplasm. It catalyses the reaction 2 D-alanine + ATP = D-alanyl-D-alanine + ADP + phosphate + H(+). It participates in cell wall biogenesis; peptidoglycan biosynthesis. Cell wall formation. This is D-alanine--D-alanine ligase from Methylocella silvestris (strain DSM 15510 / CIP 108128 / LMG 27833 / NCIMB 13906 / BL2).